The chain runs to 388 residues: Processive diacylglycerol beta-glucosyltransferase (388 aa).

It belongs to the glycosyltransferase 28 family. UgtP subfamily.

It localises to the cell membrane. The catalysed reaction is a 1,2-diacyl-3-O-(beta-D-glucopyranosyl)-sn-glycerol + UDP-alpha-D-glucose = a 1,2-diacyl-3-O-(beta-D-Glc-(1-&gt;6)-beta-D-Glc)-sn-glycerol + UDP + H(+). It carries out the reaction a 1,2-diacyl-3-O-(beta-D-Glc-(1-&gt;6)-beta-D-Glc)-sn-glycerol + UDP-alpha-D-glucose = a 1,2-diacyl-3-O-(beta-D-Glc-(1-&gt;6)-beta-D-Glc-(1-&gt;6)-beta-D-Glc)-sn-glycerol + UDP + H(+). The enzyme catalyses a 1,2-diacyl-sn-glycerol + UDP-alpha-D-glucose = a 1,2-diacyl-3-O-(beta-D-glucopyranosyl)-sn-glycerol + UDP + H(+). Its pathway is glycolipid metabolism; diglucosyl-diacylglycerol biosynthesis. Processive glucosyltransferase involved in the biosynthesis of both the bilayer- and non-bilayer-forming membrane glucolipids. Is able to successively transfer up to three glucosyl residues to diacylglycerol (DAG), thereby catalyzing the formation of beta-monoglucosyl-DAG (3-O-(beta-D-glucopyranosyl)-1,2-diacyl-sn-glycerol), beta-diglucosyl-DAG (3-O-(beta-D-glucopyranosyl-beta-(1-&gt;6)-D-glucopyranosyl)-1,2-diacyl-sn-glycerol) and beta-triglucosyl-DAG (3-O-(beta-D-glucopyranosyl-beta-(1-&gt;6)-D-glucopyranosyl-beta-(1-&gt;6)-D-glucopyranosyl)-1,2-diacyl-sn-glycerol). Beta-diglucosyl-DAG is the predominant glycolipid found in Bacillales and is also used as a membrane anchor for lipoteichoic acid (LTA). The protein is Processive diacylglycerol beta-glucosyltransferase of Bacillus cereus (strain B4264).